A 133-amino-acid chain; its full sequence is Fatty acid-binding protein, heart (133 aa).

N-acetylalanine is present on A2. Residue T8 is modified to Phosphothreonine. Residue Y20 is modified to Phosphotyrosine; by Tyr-kinases. Residue S23 is modified to Phosphoserine. T30 is subject to Phosphothreonine. The residue at position 83 (S83) is a Phosphoserine. 127-129 (RTY) lines the (9Z)-octadecenoate pocket. 127–129 (RTY) contacts hexadecanoate. Position 127–129 (127–129 (RTY)) interacts with octadecanoate.

This sequence belongs to the calycin superfamily. Fatty-acid binding protein (FABP) family.

Its subcellular location is the cytoplasm. Its function is as follows. FABPs are thought to play a role in the intracellular transport of long-chain fatty acids and their acyl-CoA esters. FABPs are important elements related to the hibernating state in mammals. This chain is Fatty acid-binding protein, heart (FABP3), found in Myotis lucifugus (Little brown bat).